The sequence spans 148 residues: Large ribosomal subunit protein bL9 (148 aa).

Belongs to the bacterial ribosomal protein bL9 family.

In terms of biological role, binds to the 23S rRNA. The sequence is that of Large ribosomal subunit protein bL9 from Pseudomonas putida (strain W619).